The chain runs to 212 residues: External core antigen (212 aa).

Residues 1-19 form the signal peptide; the sequence is MQLFPLCLIISCSCPTVQA. Positions 25–27 are HBEAG; sequence GWL. The segment at 165-212 is disordered; that stretch reads NAPILSTLPETTVVRRRGRSPRRRTPSPRRRRSQSPRRRRSQSRESQC. A compositionally biased stretch (basic residues) spans 178 to 205; that stretch reads VRRRGRSPRRRTPSPRRRRSQSPRRRRS. A 1; half-length repeat occupies 184–190; sequence SPRRRTP. A 3 X 8 AA repeats of S-P-R-R-R-R-S-Q region spans residues 184 to 206; that stretch reads SPRRRTPSPRRRRSQSPRRRRSQ. 2 tandem repeats follow at residues 191–198 and 199–206.

Belongs to the orthohepadnavirus precore antigen family. As to quaternary structure, homodimerizes. In terms of processing, phosphorylated. Post-translationally, cleaved by host furin.

The protein resides in the secreted. The protein localises to the host nucleus. Its function is as follows. May regulate immune response to the intracellular capsid in acting as a T-cell tolerogen, by having an immunoregulatory effect which prevents destruction of infected cells by cytotoxic T-cells. This immune regulation may predispose to chronicity during perinatal infections and prevent severe liver injury during adult infections. The protein is External core antigen of Hepatitis B virus genotype C subtype ayr (isolate Human/Japan/Okamoto/-) (HBV-C).